The chain runs to 240 residues: Poxin (240 aa).

The active-site Proton donor is the H46. Y181 functions as the Shared with catalytic histidine of dimeric partner in the catalytic mechanism. K185 (proton acceptor; shared with catalytic histidine of dimeric partner) is an active-site residue.

Belongs to the poxin family. As to quaternary structure, homodimer.

The catalysed reaction is 2',3'-cGAMP + H2O = Gp(2'-5')Ap(3') + H(+). In terms of biological role, nuclease that cleaves host 2',3'-cGAMP. The protein is Poxin (P26) of Lepidoptera (butterflies and moths).